The primary structure comprises 364 residues: Aminomethyltransferase (364 aa).

The protein belongs to the GcvT family. As to quaternary structure, the glycine cleavage system is composed of four proteins: P, T, L and H.

It carries out the reaction N(6)-[(R)-S(8)-aminomethyldihydrolipoyl]-L-lysyl-[protein] + (6S)-5,6,7,8-tetrahydrofolate = N(6)-[(R)-dihydrolipoyl]-L-lysyl-[protein] + (6R)-5,10-methylene-5,6,7,8-tetrahydrofolate + NH4(+). Its function is as follows. The glycine cleavage system catalyzes the degradation of glycine. This is Aminomethyltransferase from Shewanella sediminis (strain HAW-EB3).